The primary structure comprises 171 residues: Large ribosomal subunit protein uL10 (171 aa).

The protein belongs to the universal ribosomal protein uL10 family. As to quaternary structure, part of the ribosomal stalk of the 50S ribosomal subunit. The N-terminus interacts with L11 and the large rRNA to form the base of the stalk. The C-terminus forms an elongated spine to which L12 dimers bind in a sequential fashion forming a multimeric L10(L12)X complex.

Its function is as follows. Forms part of the ribosomal stalk, playing a central role in the interaction of the ribosome with GTP-bound translation factors. The chain is Large ribosomal subunit protein uL10 from Hyphomonas neptunium (strain ATCC 15444).